Consider the following 285-residue polypeptide: UDP-3-O-acyl-N-acetylglucosamine deacetylase (285 aa).

Positions 89, 243, and 247 each coordinate Zn(2+). His-270 acts as the Proton donor in catalysis.

This sequence belongs to the LpxC family. Requires Zn(2+) as cofactor.

The catalysed reaction is a UDP-3-O-[(3R)-3-hydroxyacyl]-N-acetyl-alpha-D-glucosamine + H2O = a UDP-3-O-[(3R)-3-hydroxyacyl]-alpha-D-glucosamine + acetate. The protein operates within glycolipid biosynthesis; lipid IV(A) biosynthesis; lipid IV(A) from (3R)-3-hydroxytetradecanoyl-[acyl-carrier-protein] and UDP-N-acetyl-alpha-D-glucosamine: step 2/6. Functionally, catalyzes the hydrolysis of UDP-3-O-myristoyl-N-acetylglucosamine to form UDP-3-O-myristoylglucosamine and acetate, the committed step in lipid A biosynthesis. The chain is UDP-3-O-acyl-N-acetylglucosamine deacetylase from Thermosynechococcus vestitus (strain NIES-2133 / IAM M-273 / BP-1).